A 192-amino-acid chain; its full sequence is uncharacterized protein (192 aa).

The region spanning His29 to Ser160 is the Nudix hydrolase domain. The Nudix box motif lies at Gly67–Ala89. Mg(2+) is bound by residues Glu83 and Glu87.

Belongs to the Nudix hydrolase family. PCD1 subfamily. Mn(2+) is required as a cofactor. Mg(2+) serves as cofactor.

In terms of biological role, probably mediates the hydrolysis of some nucleoside diphosphate derivatives. This is an uncharacterized protein from Escherichia coli (strain SE11).